The chain runs to 494 residues: MRVLFASSEVFPLVKTGGLADVSGALPAALAAAGEDVRILLPGYPDAIKASGAKKAVGSLGDPFGLGAEATLLSGKLPGSGVPVWLVDCPALFERAGGPYQDPQGRDWPDNALRFALLSWTAAHLCTENSPVKWRPQVLHANDWQTGLAPAYLHAWSPAQRPATVFTIHNIAYQGQFPRDLVPRLGFPPEMYAMDGFEYYDTLSFLKSGLFYSDRITTVSPRYAKEIQTPAFGCGMEGLLAHRAADLTGILNGADYEVWNPAADTHLDHAFTPGDAAGKACNKAALQAELGLSQAPDAPLMVIVSRLNDHKGMDLVLAALPNILKMGAQVAVVGTGDRPLEDGFRAAAAAHPTQVAARIGYSEPLAHRMMAGGDMLLMPSRFEPCGLTQFYAFRYGTVPVAHATGGLADTLVDTGYDTLMTGKANGFVFEHSNVGAFQWAVERAVGLYAKKDQWTRIVKACNAQDFGWGRSAGLYRDLYKSLTGNGGGKGKKKA.

Lys15 provides a ligand contact to ADP-alpha-D-glucose.

It belongs to the glycosyltransferase 1 family. Bacterial/plant glycogen synthase subfamily.

It catalyses the reaction [(1-&gt;4)-alpha-D-glucosyl](n) + ADP-alpha-D-glucose = [(1-&gt;4)-alpha-D-glucosyl](n+1) + ADP + H(+). It functions in the pathway glycan biosynthesis; glycogen biosynthesis. In terms of biological role, synthesizes alpha-1,4-glucan chains using ADP-glucose. This Paramagnetospirillum magneticum (strain ATCC 700264 / AMB-1) (Magnetospirillum magneticum) protein is Glycogen synthase.